We begin with the raw amino-acid sequence, 351 residues long: Photosystem II D2 protein (351 aa).

A helical membrane pass occupies residues 39–59 (TAYLAVGGWFTGTTFVTSWYT). H116 lines the chlorophyll a pocket. A helical transmembrane segment spans residues 123–139 (GFCLRQFEIARLVGIRP). 2 residues coordinate pheophytin a: Q128 and N141. Residues 151–164 (IFVSVFLLYPLGQA) form a helical membrane-spanning segment. H196 lines the chlorophyll a pocket. The chain crosses the membrane as a helical span at residues 206-226 (GALLCAIHGATVENTLFEDGD). 2 residues coordinate a plastoquinone: H213 and F260. H213 is a Fe cation binding site. A Fe cation-binding site is contributed by H267. Residues 277–293 (GLWTSAIGIVGLALNLR) form a helical membrane-spanning segment.

Belongs to the reaction center PufL/M/PsbA/D family. PSII is composed of 1 copy each of membrane proteins PsbA, PsbB, PsbC, PsbD, PsbE, PsbF, PsbH, PsbI, PsbJ, PsbK, PsbL, PsbM, PsbT, PsbX, PsbY, PsbZ, Psb30/Ycf12, at least 3 peripheral proteins of the oxygen-evolving complex and a large number of cofactors. It forms dimeric complexes. The D1/D2 heterodimer binds P680, chlorophylls that are the primary electron donor of PSII, and subsequent electron acceptors. It shares a non-heme iron and each subunit binds pheophytin, quinone, additional chlorophylls, carotenoids and lipids. There is also a Cl(-1) ion associated with D1 and D2, which is required for oxygen evolution. The PSII complex binds additional chlorophylls, carotenoids and specific lipids. serves as cofactor.

Its subcellular location is the plastid. The protein resides in the chloroplast thylakoid membrane. It carries out the reaction 2 a plastoquinone + 4 hnu + 2 H2O = 2 a plastoquinol + O2. Functionally, photosystem II (PSII) is a light-driven water:plastoquinone oxidoreductase that uses light energy to abstract electrons from H(2)O, generating O(2) and a proton gradient subsequently used for ATP formation. It consists of a core antenna complex that captures photons, and an electron transfer chain that converts photonic excitation into a charge separation. The D1/D2 (PsbA/PsbD) reaction center heterodimer binds P680, the primary electron donor of PSII as well as several subsequent electron acceptors. D2 is needed for assembly of a stable PSII complex. The polypeptide is Photosystem II D2 protein (Heterosigma akashiwo (strain NIES-293 / 8280G21-1)).